The following is a 122-amino-acid chain: Putative iron-sulfur cluster insertion protein ErpA (122 aa).

Positions 50, 114, and 116 each coordinate iron-sulfur cluster.

It belongs to the HesB/IscA family. As to quaternary structure, homodimer. The cofactor is iron-sulfur cluster.

Required for insertion of 4Fe-4S clusters. This is Putative iron-sulfur cluster insertion protein ErpA from Bordetella petrii (strain ATCC BAA-461 / DSM 12804 / CCUG 43448).